The following is a 208-amino-acid chain: Uracil phosphoribosyltransferase (208 aa).

5-phospho-alpha-D-ribose 1-diphosphate contacts are provided by residues arginine 78, arginine 103, and 130-138 (DPMLATGGS). Uracil-binding positions include isoleucine 193 and 198-200 (GDA). Aspartate 199 contributes to the 5-phospho-alpha-D-ribose 1-diphosphate binding site.

It belongs to the UPRTase family. The cofactor is Mg(2+).

It catalyses the reaction UMP + diphosphate = 5-phospho-alpha-D-ribose 1-diphosphate + uracil. The protein operates within pyrimidine metabolism; UMP biosynthesis via salvage pathway; UMP from uracil: step 1/1. Allosterically activated by GTP. Catalyzes the conversion of uracil and 5-phospho-alpha-D-ribose 1-diphosphate (PRPP) to UMP and diphosphate. This is Uracil phosphoribosyltransferase from Sodalis glossinidius (strain morsitans).